Reading from the N-terminus, the 430-residue chain is Asparagine--tRNA ligase (430 aa).

This sequence belongs to the class-II aminoacyl-tRNA synthetase family. In terms of assembly, homodimer.

The protein resides in the cytoplasm. It carries out the reaction tRNA(Asn) + L-asparagine + ATP = L-asparaginyl-tRNA(Asn) + AMP + diphosphate + H(+). The polypeptide is Asparagine--tRNA ligase (Pelotomaculum thermopropionicum (strain DSM 13744 / JCM 10971 / SI)).